A 67-amino-acid polypeptide reads, in one-letter code: Putative sodium channel alpha-toxin Acra7 (67 aa).

The LCN-type CS-alpha/beta domain occupies 2–66 (RDGYIVKPTN…PIKDPNQDCT (65 aa)). 4 disulfide bridges follow: Cys-12-Cys-65, Cys-16-Cys-37, Cys-23-Cys-47, and Cys-27-Cys-49. Position 67 (Arg-67) is a propeptide, removed by a carboxypeptidase.

Belongs to the long (4 C-C) scorpion toxin superfamily. Sodium channel inhibitor family. Alpha subfamily. As to expression, expressed by the venom gland.

The protein localises to the secreted. In terms of biological role, alpha toxins bind voltage-independently at site-3 of sodium channels (Nav) and inhibit the inactivation of the activated channels, thereby blocking neuronal transmission. In Androctonus crassicauda (Arabian fat-tailed scorpion), this protein is Putative sodium channel alpha-toxin Acra7.